The chain runs to 312 residues: Methionyl-tRNA formyltransferase (312 aa).

117–120 (SLLP) is a (6S)-5,6,7,8-tetrahydrofolate binding site.

Belongs to the Fmt family.

The catalysed reaction is L-methionyl-tRNA(fMet) + (6R)-10-formyltetrahydrofolate = N-formyl-L-methionyl-tRNA(fMet) + (6S)-5,6,7,8-tetrahydrofolate + H(+). Functionally, attaches a formyl group to the free amino group of methionyl-tRNA(fMet). The formyl group appears to play a dual role in the initiator identity of N-formylmethionyl-tRNA by promoting its recognition by IF2 and preventing the misappropriation of this tRNA by the elongation apparatus. The chain is Methionyl-tRNA formyltransferase from Bordetella bronchiseptica (strain ATCC BAA-588 / NCTC 13252 / RB50) (Alcaligenes bronchisepticus).